Here is a 764-residue protein sequence, read N- to C-terminus: Phosphoribosylformylglycinamidine synthase subunit PurL (764 aa).

Residue H57 is part of the active site. ATP is bound by residues Y60 and K104. E106 serves as a coordination point for Mg(2+). Substrate is bound by residues 107-110 (SHNH) and R129. H108 functions as the Proton acceptor in the catalytic mechanism. D130 provides a ligand contact to Mg(2+). Residue Q258 coordinates substrate. Mg(2+) is bound at residue D286. 330–332 (ESQ) contributes to the substrate binding site. Residues N518 and G555 each contribute to the ATP site. N556 contacts Mg(2+). S558 is a substrate binding site.

The protein belongs to the FGAMS family. Monomer. Part of the FGAM synthase complex composed of 1 PurL, 1 PurQ and 2 PurS subunits.

The protein resides in the cytoplasm. The enzyme catalyses N(2)-formyl-N(1)-(5-phospho-beta-D-ribosyl)glycinamide + L-glutamine + ATP + H2O = 2-formamido-N(1)-(5-O-phospho-beta-D-ribosyl)acetamidine + L-glutamate + ADP + phosphate + H(+). Its pathway is purine metabolism; IMP biosynthesis via de novo pathway; 5-amino-1-(5-phospho-D-ribosyl)imidazole from N(2)-formyl-N(1)-(5-phospho-D-ribosyl)glycinamide: step 1/2. Part of the phosphoribosylformylglycinamidine synthase complex involved in the purines biosynthetic pathway. Catalyzes the ATP-dependent conversion of formylglycinamide ribonucleotide (FGAR) and glutamine to yield formylglycinamidine ribonucleotide (FGAM) and glutamate. The FGAM synthase complex is composed of three subunits. PurQ produces an ammonia molecule by converting glutamine to glutamate. PurL transfers the ammonia molecule to FGAR to form FGAM in an ATP-dependent manner. PurS interacts with PurQ and PurL and is thought to assist in the transfer of the ammonia molecule from PurQ to PurL. The polypeptide is Phosphoribosylformylglycinamidine synthase subunit PurL (Nocardia farcinica (strain IFM 10152)).